Reading from the N-terminus, the 217-residue chain is MKTRMIFVGPPGAGKGSQAKIISQTLNIPHISTGDMFRTHIKGSTPLGLEAKKYTDQGLLVPDDVTNQMVKDRLSQKDVEKGFIFDGYPRTPDQAIFLDNLLMVTNQKLDVVLNISSSDEVIVKRITGRRTCPVCGAIYHVDNYPPKVAGICDNDGATLVQRKDDQKETIIRRLSVYKEETFPLIKYYAHKNLLMDVDGNQPLEVITKHVLEILEQK.

Residue 12-17 (GAGKGS) coordinates ATP. The tract at residues 32 to 61 (STGDMFRTHIKGSTPLGLEAKKYTDQGLLV) is NMP. Residues threonine 33, arginine 38, 59 to 61 (LLV), 87 to 90 (GYPR), and glutamine 94 contribute to the AMP site. The segment at 128-165 (GRRTCPVCGAIYHVDNYPPKVAGICDNDGATLVQRKDD) is LID. Arginine 129 is an ATP binding site. Zn(2+)-binding residues include cysteine 132 and cysteine 135. 138-139 (IY) is a binding site for ATP. Cysteine 152 and aspartate 155 together coordinate Zn(2+). Residues arginine 162 and arginine 173 each contribute to the AMP site. Glutamine 201 contributes to the ATP binding site.

It belongs to the adenylate kinase family. As to quaternary structure, monomer.

It localises to the cytoplasm. The enzyme catalyses AMP + ATP = 2 ADP. Its pathway is purine metabolism; AMP biosynthesis via salvage pathway; AMP from ADP: step 1/1. In terms of biological role, catalyzes the reversible transfer of the terminal phosphate group between ATP and AMP. Plays an important role in cellular energy homeostasis and in adenine nucleotide metabolism. The protein is Adenylate kinase of Acholeplasma laidlawii (strain PG-8A).